The primary structure comprises 400 residues: Phosphoglycerate kinase (400 aa).

Substrate is bound by residues 19 to 21, Arg38, 61 to 64, Arg124, and Arg161; these read DLN and HLGR. ATP is bound by residues Lys211, Gly299, Glu330, and 356–359; that span reads GGDS.

This sequence belongs to the phosphoglycerate kinase family. Monomer.

It is found in the cytoplasm. It carries out the reaction (2R)-3-phosphoglycerate + ATP = (2R)-3-phospho-glyceroyl phosphate + ADP. It participates in carbohydrate degradation; glycolysis; pyruvate from D-glyceraldehyde 3-phosphate: step 2/5. The chain is Phosphoglycerate kinase from Frankia alni (strain DSM 45986 / CECT 9034 / ACN14a).